Reading from the N-terminus, the 141-residue chain is Nucleoside diphosphate kinase (141 aa).

Lys11, Phe59, Arg87, Thr93, Arg104, and Asn114 together coordinate ATP. The active-site Pros-phosphohistidine intermediate is the His117.

It belongs to the NDK family. As to quaternary structure, homotetramer. Mg(2+) serves as cofactor.

The protein localises to the cytoplasm. The enzyme catalyses a 2'-deoxyribonucleoside 5'-diphosphate + ATP = a 2'-deoxyribonucleoside 5'-triphosphate + ADP. The catalysed reaction is a ribonucleoside 5'-diphosphate + ATP = a ribonucleoside 5'-triphosphate + ADP. In terms of biological role, major role in the synthesis of nucleoside triphosphates other than ATP. The ATP gamma phosphate is transferred to the NDP beta phosphate via a ping-pong mechanism, using a phosphorylated active-site intermediate. This chain is Nucleoside diphosphate kinase, found in Paraburkholderia phymatum (strain DSM 17167 / CIP 108236 / LMG 21445 / STM815) (Burkholderia phymatum).